The following is a 422-amino-acid chain: Transcription termination factor Rho 1 (422 aa).

A Rho RNA-BD domain is found at alanine 49 to aspartate 124. ATP is bound by residues glycine 173 to alanine 178, arginine 185 to isoleucine 190, and arginine 216.

It belongs to the Rho family. In terms of assembly, homohexamer. The homohexamer assembles into an open ring structure.

Its function is as follows. Facilitates transcription termination by a mechanism that involves Rho binding to the nascent RNA, activation of Rho's RNA-dependent ATPase activity, and release of the mRNA from the DNA template. The polypeptide is Transcription termination factor Rho 1 (Ehrlichia chaffeensis (strain ATCC CRL-10679 / Arkansas)).